The chain runs to 393 residues: Cyclin CCL1 (393 aa).

Residues methionine 1 to methionine 19 are compositionally biased toward polar residues. Disordered stretches follow at residues methionine 1–aspartate 45 and serine 289–tyrosine 325. 2 stretches are compositionally biased toward basic and acidic residues: residues alanine 21–asparagine 35 and asparagine 300–glutamate 321.

Belongs to the cyclin family. Cyclin C subfamily. As to quaternary structure, CCL1 and KIN28 form the TFIIK complex, a component of TFIIH holo complex. Component of a complex consisting of KIN28, CCL1 and TFB3.

Its function is as follows. Regulatory component of the TFIIK complex (KIN28-CCL1 dimer) which is the protein kinase component of transcription factor IIH (TFIIH) and phosphorylates the C-terminal domain of RNA polymerase II during transition from transcription to elongation after preinitiation complex (PIC) formation, thereby positively regulating transcription. TFIIH (or factor B) is essential for both basal and activated transcription, and is involved in nucleotide excision repair (NER) of damaged DNA. TFIIH has DNA-dependent ATPase activity and is essential for polymerase II transcription in vitro. The sequence is that of Cyclin CCL1 (CCL1) from Saccharomyces cerevisiae (strain ATCC 204508 / S288c) (Baker's yeast).